A 757-amino-acid polypeptide reads, in one-letter code: Catalase-peroxidase (757 aa).

A disordered region spans residues Met-1 to Asn-28. Over residues Ser-17 to Asn-28 the composition is skewed to polar residues. The tryptophyl-tyrosyl-methioninium (Trp-Tyr) (with M-273) cross-link spans Trp-100–Tyr-247. Catalysis depends on His-101, which acts as the Proton acceptor. Residues Tyr-247–Met-273 constitute a cross-link (tryptophyl-tyrosyl-methioninium (Tyr-Met) (with W-100)). His-288 is a binding site for heme b.

This sequence belongs to the peroxidase family. Peroxidase/catalase subfamily. Homodimer or homotetramer. It depends on heme b as a cofactor. Formation of the three residue Trp-Tyr-Met cross-link is important for the catalase, but not the peroxidase activity of the enzyme.

It catalyses the reaction H2O2 + AH2 = A + 2 H2O. The enzyme catalyses 2 H2O2 = O2 + 2 H2O. Bifunctional enzyme with both catalase and broad-spectrum peroxidase activity. In Flavobacterium johnsoniae (strain ATCC 17061 / DSM 2064 / JCM 8514 / BCRC 14874 / CCUG 350202 / NBRC 14942 / NCIMB 11054 / UW101) (Cytophaga johnsonae), this protein is Catalase-peroxidase.